A 265-amino-acid polypeptide reads, in one-letter code: 4-hydroxy-tetrahydrodipicolinate reductase (265 aa).

NAD(+) is bound by residues 7–12 and D33; that span reads GASGRM. R34 serves as a coordination point for NADP(+). NAD(+)-binding positions include 96–98 and 120–123; these read GTT and SANM. H153 serves as the catalytic Proton donor/acceptor. H154 lines the (S)-2,3,4,5-tetrahydrodipicolinate pocket. K157 acts as the Proton donor in catalysis. 163–164 serves as a coordination point for (S)-2,3,4,5-tetrahydrodipicolinate; that stretch reads GT.

This sequence belongs to the DapB family.

The protein resides in the cytoplasm. The catalysed reaction is (S)-2,3,4,5-tetrahydrodipicolinate + NAD(+) + H2O = (2S,4S)-4-hydroxy-2,3,4,5-tetrahydrodipicolinate + NADH + H(+). The enzyme catalyses (S)-2,3,4,5-tetrahydrodipicolinate + NADP(+) + H2O = (2S,4S)-4-hydroxy-2,3,4,5-tetrahydrodipicolinate + NADPH + H(+). The protein operates within amino-acid biosynthesis; L-lysine biosynthesis via DAP pathway; (S)-tetrahydrodipicolinate from L-aspartate: step 4/4. Catalyzes the conversion of 4-hydroxy-tetrahydrodipicolinate (HTPA) to tetrahydrodipicolinate. The protein is 4-hydroxy-tetrahydrodipicolinate reductase of Burkholderia pseudomallei (strain 1106a).